A 147-amino-acid chain; its full sequence is Large ribosomal subunit protein uL13 (147 aa).

Belongs to the universal ribosomal protein uL13 family. In terms of assembly, part of the 50S ribosomal subunit.

This protein is one of the early assembly proteins of the 50S ribosomal subunit, although it is not seen to bind rRNA by itself. It is important during the early stages of 50S assembly. In Lactiplantibacillus plantarum (strain ATCC BAA-793 / NCIMB 8826 / WCFS1) (Lactobacillus plantarum), this protein is Large ribosomal subunit protein uL13.